A 122-amino-acid chain; its full sequence is Large ribosomal subunit protein bL12 (122 aa).

Belongs to the bacterial ribosomal protein bL12 family. In terms of assembly, homodimer. Part of the ribosomal stalk of the 50S ribosomal subunit. Forms a multimeric L10(L12)X complex, where L10 forms an elongated spine to which 2 to 4 L12 dimers bind in a sequential fashion. Binds GTP-bound translation factors.

Forms part of the ribosomal stalk which helps the ribosome interact with GTP-bound translation factors. Is thus essential for accurate translation. The polypeptide is Large ribosomal subunit protein bL12 (Pseudomonas entomophila (strain L48)).